The primary structure comprises 92 residues: Small ribosomal subunit protein uS19c (92 aa).

The protein belongs to the universal ribosomal protein uS19 family.

The protein localises to the plastid. Its subcellular location is the chloroplast. Its function is as follows. Protein S19 forms a complex with S13 that binds strongly to the 16S ribosomal RNA. The polypeptide is Small ribosomal subunit protein uS19c (Vitis vinifera (Grape)).